The primary structure comprises 1377 residues: DNA-directed RNA polymerase subunit beta (1377 aa).

It belongs to the RNA polymerase beta chain family. In terms of assembly, the RNAP catalytic core consists of 2 alpha, 1 beta, 1 beta' and 1 omega subunit. When a sigma factor is associated with the core the holoenzyme is formed, which can initiate transcription.

The enzyme catalyses RNA(n) + a ribonucleoside 5'-triphosphate = RNA(n+1) + diphosphate. DNA-dependent RNA polymerase catalyzes the transcription of DNA into RNA using the four ribonucleoside triphosphates as substrates. This is DNA-directed RNA polymerase subunit beta from Aromatoleum aromaticum (strain DSM 19018 / LMG 30748 / EbN1) (Azoarcus sp. (strain EbN1)).